We begin with the raw amino-acid sequence, 398 residues long: Tryptophan synthase beta chain (398 aa).

The residue at position 88 (lysine 88) is an N6-(pyridoxal phosphate)lysine.

It belongs to the TrpB family. In terms of assembly, tetramer of two alpha and two beta chains. Pyridoxal 5'-phosphate serves as cofactor.

It catalyses the reaction (1S,2R)-1-C-(indol-3-yl)glycerol 3-phosphate + L-serine = D-glyceraldehyde 3-phosphate + L-tryptophan + H2O. Its pathway is amino-acid biosynthesis; L-tryptophan biosynthesis; L-tryptophan from chorismate: step 5/5. Its function is as follows. The beta subunit is responsible for the synthesis of L-tryptophan from indole and L-serine. The polypeptide is Tryptophan synthase beta chain (Haemophilus influenzae (strain PittGG)).